We begin with the raw amino-acid sequence, 589 residues long: MGKSEKTSLGRSLVKHHNHMIQESKDKGKYYKNLQKKVLESVTEVSDIDAIIEQAEEAERLYTINHSSSTPLSINLDTNSSSSVIAAEEWREQQKIEEALHASSLQVPRRPPWTPEMSVEELDANEKQAFLNWRRMLVSLEENEKLVLTPFEKNLDIWRQLWRVLERSDLIVMVVDARDPLFYRCPDLEAYAQEIDEHKKIMLLVNKADLLPTDVREKWAEYFRLNNILFVFWSAIAATATLEGKVLKEQWRQPDNLQKTDDPDIMIYGRDELLSRLQFEAQEIVKVRNSRAASVSSQSWTGEYQRDQAVVGFVGYPNVGKSSTINALVGQKRTGVTSTPGKTKHFQTLIISDELMLCDCPGLVFPSFSSSRYEMIASGVLPIDRMTEHREAIQVVADKVPRRVIESVYNISLPKPKTYERQSRPPHAAELLKSYCASRGYVASSGLPDETKAARLILKDYIGGKLPHYAMPPGMPQADEPDIEDTQELEDILEGSESDDSAVGDETENEQVPGIDDVLDDLSSFDLANGLKSSKKVTAKKQTASHKQHKKPQRKKDRTWRVQNTEDGDGMPSVKVFQKPANTGPLTMR.

Residues 1-26 (MGKSEKTSLGRSLVKHHNHMIQESKD) are disordered. Residues 158-366 (WRQLWRVLER…LCDCPGLVFP (209 aa)) enclose the CP-type G domain. The short motif at 176–180 (DARDP) is the DARXP motif element. The tract at residues 206-209 (NKAD) is G4. 206–209 (NKAD) is a GTP binding site. The tract at residues 237–239 (AAT) is G5. The segment at 315 to 322 (GYPNVGKS) is G1. Residue 318–323 (NVGKSS) coordinates GTP. Residues 341 to 345 (GKTKH) are G2. Residues 359 to 362 (DCPG) are G3. G362 lines the GTP pocket. Over residues 495–509 (GSESDDSAVGDETEN) the composition is skewed to acidic residues. Disordered regions lie at residues 495–515 (GSES…VPGI) and 534–589 (SKKV…LTMR). Positions 534 to 541 (SKKVTAKK) match the Nuclear localization signal motif. The segment covering 534 to 558 (SKKVTAKKQTASHKQHKKPQRKKDR) has biased composition (basic residues). The span at 580–589 (PANTGPLTMR) shows a compositional bias: polar residues.

It belongs to the TRAFAC class YlqF/YawG GTPase family. As to expression, ubiquitous, with the highest expression in reproductive and strongly dividing tissues.

The protein resides in the cytoplasm. The protein localises to the nucleus. GTPase involved in ribosome biogenesis. Binds to 23S rRNA and associates with 60S pre-ribosomes. Involved in early cotyledon and leaf development. The sequence is that of GTPase LSG1-2 from Arabidopsis thaliana (Mouse-ear cress).